The following is a 684-amino-acid chain: Cyclic nucleotide-gated channel alpha-1 (684 aa).

At 1–161 the chain is on the cytoplasmic side; the sequence is MKTNIINTWH…PSGNTYYNWL (161 aa). A disordered region spans residues 34–145; it reads ACSSFSDDDN…TKEKKEEEKK (112 aa). The segment covering 39-54 has biased composition (acidic residues); it reads SDDDNGSLSEESENED. Basic and acidic residues predominate over residues 105–145; sequence SKADDKNENKKDPEKKKKKEKEKEKKKKEEKTKEKKEEEKK. A helical transmembrane segment spans residues 162–183; that stretch reads FCITLPVMYNWTMIIARACFDE. At 184–193 the chain is on the extracellular side; sequence LQSDYLEYWL. The chain crosses the membrane as a helical span at residues 194 to 214; sequence IFDYVSDVVYLADMFVRTRTG. Residues 215 to 239 are Cytoplasmic-facing; sequence YLEQGLLVKDRMKLIEKYKANLQFK. A helical membrane pass occupies residues 240-258; it reads LDVLSVIPTDLLYIKFGWN. The Extracellular segment spans residues 259-263; it reads YPEIR. The helical transmembrane segment at 264 to 282 threads the bilayer; it reads LNRLLRISRMFEFFQRTET. Residues 283-289 lie on the Cytoplasmic side of the membrane; that stretch reads RTNYPNI. Residues 287-395 form an ion conduction pathway region; sequence PNIFRISNLV…GNIGSMISNM (109 aa). Residues 290 to 313 form a helical membrane-spanning segment; it reads FRISNLVMYIVIIIHWNACVYYSI. Topologically, residues 314–336 are extracellular; the sequence is SKAIGFGNDTWVYPDVNDPEFGR. N-linked (GlcNAc...) asparagine glycosylation occurs at Asn321. 2 helical membrane-spanning segments follow: residues 337–371 and 372–396; these read LARK…IFVV and VDFL…SNMN. The segment at 354–357 is selectivity filter; it reads TIGE. A C-linker region spans residues 397–473; sequence AARAEFQSRV…DTLKKVRIFA (77 aa). The Cytoplasmic segment spans residues 397–684; sequence AARAEFQSRV…ESELTESLQD (288 aa). The segment at 477 to 597 is cyclic nucleotide-binding domain; the sequence is AGLLVELVLK…EEKGRQILMK (121 aa). 3',5'-cyclic GMP is bound by residues Gly537, Ser540, Arg553, and Thr554. 3',5'-cyclic AMP-binding residues include Arg553 and Thr554. A coiled-coil region spans residues 615–669; sequence LEEKVTRMEGSVDLLQTRFARILAEYESMQQKLKQRLTKVEKFLKPLIETEFSAL.

The protein belongs to the cyclic nucleotide-gated cation channel (TC 1.A.1.5) family. CNGA1 subfamily. Forms heterotetrameric channels composed of CNGA1 and CNGB1 subunits with 3:1 stoichiometry. May also form cyclic nucleotide-activated homotetrameric channels, that are efficiently activated by saturating cGMP, but poorly activated by saturating cAMP compared to the heterotetramer with CNGB1. The channel binds Ca(2+)-bound CALM1 via CaM1 and CaM2 regions of the CNGB1 subunit; this interaction modulates the affinity of the channel for cNMPs in response to intracellular Ca(2+) levels. In terms of tissue distribution, rod cells in the retina and inner medulla of kidney.

Its subcellular location is the cell membrane. It carries out the reaction Ca(2+)(in) = Ca(2+)(out). The catalysed reaction is Na(+)(in) = Na(+)(out). It catalyses the reaction K(+)(in) = K(+)(out). The enzyme catalyses NH4(+)(in) = NH4(+)(out). It carries out the reaction Rb(+)(in) = Rb(+)(out). The catalysed reaction is Li(+)(in) = Li(+)(out). It catalyses the reaction Cs(+)(in) = Cs(+)(out). Functionally, pore-forming subunit of the rod cyclic nucleotide-gated channel. Mediates rod photoresponses at dim light converting transient changes in intracellular cGMP levels into electrical signals. In the dark, cGMP levels are high and keep the channel open enabling a steady inward current carried by Na(+) and Ca(2+) ions that leads to membrane depolarization and neurotransmitter release from synaptic terminals. Upon photon absorption cGMP levels decline leading to channel closure and membrane hyperpolarization that ultimately slows neurotransmitter release and signals the presence of light, the end point of the phototransduction cascade. Conducts cGMP- and cAMP-gated ion currents, with permeability for monovalent and divalent cations. The selectivity for Ca(2+) over Na(+) increases with cGMP concentrations, whereas the selectivity among monovalent ions is independent of the cGMP levels. The chain is Cyclic nucleotide-gated channel alpha-1 (Cnga1) from Mus musculus (Mouse).